A 32-amino-acid polypeptide reads, in one-letter code: Apolipophorin-3 (32 aa).

The disordered stretch occupies residues 1–32; that stretch reads DAPSTTPPQDXEKKAAEFQKTFTEQXNQLANK. Positions 20-32 are enriched in polar residues; it reads KTFTEQXNQLANK.

The protein belongs to the insect apolipophorin-3 family. As to quaternary structure, equilibrium between a soluble monomer and a bound lipoprotein form. Apolipophorin-3 associates with lipophorin during lipid loading until each particle contains 9 or 14 molecules of apolipophorin-3. As to expression, hemolymph.

The protein resides in the secreted. Its function is as follows. Assists in the loading of diacylglycerol, generated from triacylglycerol stores in the fat body through the action of adipokinetic hormone, into lipophorin, the hemolymph lipoprotein. It increases the lipid carrying capacity of lipophorin by covering the expanding hydrophobic surface resulting from diacylglycerol uptake. It thus plays a critical role in the transport of lipids during flight in several species of insects. This chain is Apolipophorin-3, found in Diatraea grandiosella (Southwestern corn borer).